Reading from the N-terminus, the 615-residue chain is Delta-like protein B (615 aa).

The N-terminal stretch at 1 to 20 (MAHLSLYCLLSVSLLQLVAS) is a signal peptide. Over 21–522 (SGVFELKVHS…VGQTSPSAVA (502 aa)) the chain is Extracellular. The DSL domain maps to 159–203 (VFCDEFYFGEACSDYCRPRDDTLGHYTCDENGNKECLVGWQGDYC). Disulfide bonds link C161–C170, C174–C186, C194–C203, C208–C219, C212–C225, C227–C236, C245–C250, C258–C267, C274–C286, C280–C296, C298–C307, C314–C325, C319–C334, C336–C345, C352–C363, C357–C373, C375–C384, C391–C402, C396–C411, C413–C422, C429–C440, C434–C449, C451–C460, C467–C478, C472–C487, and C489–C498. EGF-like domains lie at 204–237 (SDPI…PSCS), 241–268 (HYPG…LFCN), and 270–308 (DLNY…TNCE). The region spanning 310-346 (EINECDCNPCKNGGSCNDLENDYSCTCPQGFYGKNCE) is the EGF-like 4; calcium-binding domain. EGF-like domains lie at 348-385 (IAMT…SNCE) and 387-423 (RLDR…SRCE). The EGF-like 7; calcium-binding domain maps to 425-461 (NIDDCARYPCQNAGTCQDGINDYTCTCTLGFTGKNCS). The N-linked (GlcNAc...) asparagine glycan is linked to N459. The region spanning 463 to 499 (RADACLTNPCLHGGTCFTHFSGPVCQCVPGFMGSTCE) is the EGF-like 8 domain. The helical transmembrane segment at 523–543 (VSCVLGVLAVFLGVCVGLVVL) threads the bilayer. Over 544-615 (RRRRHRLRRQ…FLWSAGGGLR (72 aa)) the chain is Cytoplasmic.

Post-translationally, ubiquitinated by mib, leading to its endocytosis and subsequent degradation.

Its subcellular location is the membrane. Functionally, acts as a ligand for Notch receptors and is involved in primary neurogenesis. Can activate Notch receptors, thereby playing a key role in lateral inhibition, a process that prevents the immediate neighbors of each nascent neural cell from simultaneously embarking on neural differentiation. This is Delta-like protein B (dlb) from Danio rerio (Zebrafish).